A 622-amino-acid polypeptide reads, in one-letter code: MYVLSETKSNFLKLIAEALKRRGLEVEEEELERLAGRPPSPEMGDLGVSLFRYAKKLGLRPEELTSELKGEIEGRLAGVKEVKAIGGFLNVELEPSWLAERALREASREDYGKWSFSGRLVVEHTSANPVHPLHVGHARNMFLGDSLVRILKNWGADVQSRFYINDMGRQVAVLVYGLLKLGRLEPPEGEKPDHWYGKVYSVANALVELNSPSKGDDEKKEWEEVLKELESKWPEIVREMKEKFDDEDPEAKVSELMKKYEEGDPEVKETFRKVVNEVLKGFKETMERVGVNVDKWDWESDLVWSGEVDKIINMAKEKGLVIEKDGALVMVFKNLNDEVRRRLRIPKGLQIPPLVLKRSDGTTLYTTRDIAYTIKKFEEFRADRVINVIAAEQRLPQIQLRLALWELGFKEYAENLIHYAYEMVNVPGMKMSGRRGRMITLDWLLDEAERRVRELVEGRSEAEDVDEVVKKVAVGAVKFAMVSVSPEKPITFKWEEVLNFERNSAPYLQYTYARAVGILRKGGEPDLERADYSKAEKYKDMILSIAEFPEVARKAAEDLKPDLIATYLLSLADKFNEFYHKEPVAKEPDEGLRNLKLALVKAVANTIRRGLWLLGVEAPARM.

Residues 127–137 (ANPVHPLHVGH) carry the 'HIGH' region motif.

This sequence belongs to the class-I aminoacyl-tRNA synthetase family.

It is found in the cytoplasm. It catalyses the reaction tRNA(Arg) + L-arginine + ATP = L-arginyl-tRNA(Arg) + AMP + diphosphate. The sequence is that of Arginine--tRNA ligase from Ignicoccus hospitalis (strain KIN4/I / DSM 18386 / JCM 14125).